Consider the following 426-residue polypeptide: Glutamate-1-semialdehyde 2,1-aminomutase (426 aa).

K268 is subject to N6-(pyridoxal phosphate)lysine.

This sequence belongs to the class-III pyridoxal-phosphate-dependent aminotransferase family. HemL subfamily. Requires pyridoxal 5'-phosphate as cofactor.

Its subcellular location is the cytoplasm. The enzyme catalyses (S)-4-amino-5-oxopentanoate = 5-aminolevulinate. The protein operates within porphyrin-containing compound metabolism; protoporphyrin-IX biosynthesis; 5-aminolevulinate from L-glutamyl-tRNA(Glu): step 2/2. The chain is Glutamate-1-semialdehyde 2,1-aminomutase from Saccharolobus islandicus (strain M.16.27) (Sulfolobus islandicus).